A 243-amino-acid polypeptide reads, in one-letter code: Hydroxyacylglutathione hydrolase (243 aa).

Zn(2+)-binding residues include H59, H61, D63, H64, H117, D135, and H173.

Belongs to the metallo-beta-lactamase superfamily. Glyoxalase II family. As to quaternary structure, monomer. It depends on Zn(2+) as a cofactor.

The catalysed reaction is an S-(2-hydroxyacyl)glutathione + H2O = a 2-hydroxy carboxylate + glutathione + H(+). The protein operates within secondary metabolite metabolism; methylglyoxal degradation; (R)-lactate from methylglyoxal: step 2/2. In terms of biological role, thiolesterase that catalyzes the hydrolysis of S-D-lactoyl-glutathione to form glutathione and D-lactic acid. This is Hydroxyacylglutathione hydrolase from Acidiphilium cryptum (strain JF-5).